Here is a 250-residue protein sequence, read N- to C-terminus: Probable phosphatase VIBHAR_04983 (250 aa).

The Zn(2+) site is built by His-8, His-10, His-16, His-41, Glu-74, His-102, His-132, Asp-194, and His-196.

This sequence belongs to the PHP family. Zn(2+) serves as cofactor.

The polypeptide is Probable phosphatase VIBHAR_04983 (Vibrio campbellii (strain ATCC BAA-1116)).